The sequence spans 364 residues: Capsular polysaccharide phosphotransferase cps1A (364 aa).

It belongs to the stealth family.

Its function is as follows. Part of a capsular polysaccharide synthesis locus. This is Capsular polysaccharide phosphotransferase cps1A (cps1A) from Actinobacillus pleuropneumoniae (Haemophilus pleuropneumoniae).